The chain runs to 443 residues: Xaa-Pro dipeptidase (443 aa).

Residues Asp246, Asp257, His339, Glu384, and Glu423 each coordinate Mn(2+).

This sequence belongs to the peptidase M24B family. Bacterial-type prolidase subfamily. It depends on Mn(2+) as a cofactor.

It carries out the reaction Xaa-L-Pro dipeptide + H2O = an L-alpha-amino acid + L-proline. Its function is as follows. Splits dipeptides with a prolyl residue in the C-terminal position. This is Xaa-Pro dipeptidase from Escherichia coli (strain 55989 / EAEC).